The sequence spans 352 residues: Heat-inducible transcription repressor HrcA (352 aa).

This sequence belongs to the HrcA family.

Negative regulator of class I heat shock genes (grpE-dnaK-dnaJ and groELS operons). Prevents heat-shock induction of these operons. The polypeptide is Heat-inducible transcription repressor HrcA (Latilactobacillus sakei (Lactobacillus sakei)).